The following is a 354-amino-acid chain: 3-dehydroquinate synthase (354 aa).

NAD(+)-binding positions include 100–104, 124–125, lysine 136, lysine 145, and 163–166; these read GATGD, TT, and FLKT. 3 residues coordinate Zn(2+): glutamate 178, histidine 242, and histidine 256.

It belongs to the sugar phosphate cyclases superfamily. Dehydroquinate synthase family. The cofactor is Co(2+). Requires Zn(2+) as cofactor. NAD(+) serves as cofactor.

It is found in the cytoplasm. The catalysed reaction is 7-phospho-2-dehydro-3-deoxy-D-arabino-heptonate = 3-dehydroquinate + phosphate. It functions in the pathway metabolic intermediate biosynthesis; chorismate biosynthesis; chorismate from D-erythrose 4-phosphate and phosphoenolpyruvate: step 2/7. In terms of biological role, catalyzes the conversion of 3-deoxy-D-arabino-heptulosonate 7-phosphate (DAHP) to dehydroquinate (DHQ). This chain is 3-dehydroquinate synthase, found in Staphylococcus aureus (strain NCTC 8325 / PS 47).